Consider the following 343-residue polypeptide: Probable xyloglucan endotransglucosylase/hydrolase protein 30 (343 aa).

The signal sequence occupies residues 1–23 (MSKSSYNHIFILILCLCLRSSSA). The region spanning 24–224 (FTNLNTLSFE…YKFAPFVAEF (201 aa)) is the GH16 domain. The active-site Nucleophile is the E109. The active-site Proton donor is the E113. Xyloglucan is bound by residues E113 and 126-128 (QTN). N132 is a glycosylation site (N-linked (GlcNAc...) asparagine). Residues 136-140 (HRGRE), 203-204 (DW), G208, and R285 each bind xyloglucan. A disulfide bridge links C280 with C293. Residues 306 to 343 (TGRLKFGGTEARERRRNRRQQRRPEIEIESDPDDRKLL) form a disordered region.

It belongs to the glycosyl hydrolase 16 family. XTH group 3 subfamily. Post-translationally, contains at least one intrachain disulfide bond essential for its enzymatic activity. In terms of tissue distribution, predominantly expressed in green siliques.

It is found in the secreted. Its subcellular location is the cell wall. It localises to the extracellular space. The protein localises to the apoplast. The catalysed reaction is breaks a beta-(1-&gt;4) bond in the backbone of a xyloglucan and transfers the xyloglucanyl segment on to O-4 of the non-reducing terminal glucose residue of an acceptor, which can be a xyloglucan or an oligosaccharide of xyloglucan.. Functionally, catalyzes xyloglucan endohydrolysis (XEH) and/or endotransglycosylation (XET). Cleaves and religates xyloglucan polymers, an essential constituent of the primary cell wall, and thereby participates in cell wall construction of growing tissues. The chain is Probable xyloglucan endotransglucosylase/hydrolase protein 30 (XTH30) from Arabidopsis thaliana (Mouse-ear cress).